A 398-amino-acid polypeptide reads, in one-letter code: Mitogen-activated protein kinase 1 (398 aa).

The disordered stretch occupies residues 1-26; sequence MDAGAQPPDTEMAEAGGGQQPPAAAA. The Protein kinase domain occupies 67–352; the sequence is KPPILPIGKG…VEGALAHPYL (286 aa). ATP contacts are provided by residues 73–81 and Lys-96; that span reads IGKGAYGIV. The Proton acceptor role is filled by Asp-193. Thr-225 carries the phosphothreonine modification. Positions 225–227 match the TXY motif; that stretch reads TEY. At Tyr-227 the chain carries Phosphotyrosine.

This sequence belongs to the protein kinase superfamily. CMGC Ser/Thr protein kinase family. MAP kinase subfamily. As to quaternary structure, may interact with RAC1. In terms of processing, dually phosphorylated on Thr-225 and Tyr-227, which activates the enzyme.

The enzyme catalyses L-seryl-[protein] + ATP = O-phospho-L-seryl-[protein] + ADP + H(+). It carries out the reaction L-threonyl-[protein] + ATP = O-phospho-L-threonyl-[protein] + ADP + H(+). With respect to regulation, activated by threonine and tyrosine phosphorylation. Activated in response to sphingolipid elicitor (SE). Its function is as follows. Involved in sphingolipid elicitor (SE)-dependent defense signaling pathway. Acts downstream of heterotrimeric G protein alpha subunit and small GTPase RAC1. May regulate the expression of various genes involved in biotic and abiotic stress response. Involved in an abscisic acid signaling pathway that regulates the activities of antioxidant enzymes and the production of hydrogen peroxide. Acts downstream of CCAMK. This Oryza sativa subsp. japonica (Rice) protein is Mitogen-activated protein kinase 1 (MPK1).